A 219-amino-acid chain; its full sequence is tRNA (guanine-N(7)-)-methyltransferase (219 aa).

4 residues coordinate S-adenosyl-L-methionine: Glu46, Glu71, Asp100, and Asp122. The active site involves Asp122. Lys126 is a binding site for substrate. The interval 128–133 (KHEKRR) is interaction with RNA. Substrate-binding positions include Asp158 and 199 to 202 (TEYE).

The protein belongs to the class I-like SAM-binding methyltransferase superfamily. TrmB family.

The catalysed reaction is guanosine(46) in tRNA + S-adenosyl-L-methionine = N(7)-methylguanosine(46) in tRNA + S-adenosyl-L-homocysteine. Its pathway is tRNA modification; N(7)-methylguanine-tRNA biosynthesis. In terms of biological role, catalyzes the formation of N(7)-methylguanine at position 46 (m7G46) in tRNA. The chain is tRNA (guanine-N(7)-)-methyltransferase from Oenococcus oeni (strain ATCC BAA-331 / PSU-1).